Reading from the N-terminus, the 270-residue chain is Putative phosphoenolpyruvate synthase regulatory protein (270 aa).

150-157 (GVSRCGKT) contacts ADP.

It belongs to the pyruvate, phosphate/water dikinase regulatory protein family. PSRP subfamily.

The enzyme catalyses [pyruvate, water dikinase] + ADP = [pyruvate, water dikinase]-phosphate + AMP + H(+). The catalysed reaction is [pyruvate, water dikinase]-phosphate + phosphate + H(+) = [pyruvate, water dikinase] + diphosphate. Functionally, bifunctional serine/threonine kinase and phosphorylase involved in the regulation of the phosphoenolpyruvate synthase (PEPS) by catalyzing its phosphorylation/dephosphorylation. This Aeromonas hydrophila subsp. hydrophila (strain ATCC 7966 / DSM 30187 / BCRC 13018 / CCUG 14551 / JCM 1027 / KCTC 2358 / NCIMB 9240 / NCTC 8049) protein is Putative phosphoenolpyruvate synthase regulatory protein.